A 206-amino-acid polypeptide reads, in one-letter code: Protein sym1 (206 aa).

Transmembrane regions (helical) follow at residues 107–127 (VLLD…SWMT) and 169–189 (LQYQ…FLSL).

The protein belongs to the peroxisomal membrane protein PXMP2/4 family.

It is found in the mitochondrion inner membrane. This chain is Protein sym1 (sym1), found in Schizosaccharomyces pombe (strain 972 / ATCC 24843) (Fission yeast).